A 168-amino-acid polypeptide reads, in one-letter code: Transcription antitermination protein NusB (168 aa).

This sequence belongs to the NusB family.

Involved in transcription antitermination. Required for transcription of ribosomal RNA (rRNA) genes. Binds specifically to the boxA antiterminator sequence of the ribosomal RNA (rrn) operons. In Bradyrhizobium sp. (strain ORS 278), this protein is Transcription antitermination protein NusB.